A 154-amino-acid polypeptide reads, in one-letter code: Ribosome maturation factor RimP (154 aa).

This sequence belongs to the RimP family.

The protein resides in the cytoplasm. Its function is as follows. Required for maturation of 30S ribosomal subunits. This Haemophilus ducreyi (strain 35000HP / ATCC 700724) protein is Ribosome maturation factor RimP.